The primary structure comprises 142 residues: Protein-export protein SecB (142 aa).

Belongs to the SecB family. Homotetramer, a dimer of dimers. One homotetramer interacts with 1 SecA dimer.

Its subcellular location is the cytoplasm. Functionally, one of the proteins required for the normal export of preproteins out of the cell cytoplasm. It is a molecular chaperone that binds to a subset of precursor proteins, maintaining them in a translocation-competent state. It also specifically binds to its receptor SecA. In Buchnera aphidicola subsp. Acyrthosiphon pisum (strain 5A), this protein is Protein-export protein SecB.